The primary structure comprises 544 residues: Protein nucleotidyltransferase YdiU (544 aa).

Positions 133, 135, 136, 155, 167, 168, 218, and 225 each coordinate ATP. The Proton acceptor role is filled by Asp-294. Asn-295 and Asp-304 together coordinate Mg(2+). Asp-304 contacts ATP.

Belongs to the SELO family. Mg(2+) is required as a cofactor. Mn(2+) serves as cofactor.

It catalyses the reaction L-seryl-[protein] + ATP = 3-O-(5'-adenylyl)-L-seryl-[protein] + diphosphate. The enzyme catalyses L-threonyl-[protein] + ATP = 3-O-(5'-adenylyl)-L-threonyl-[protein] + diphosphate. The catalysed reaction is L-tyrosyl-[protein] + ATP = O-(5'-adenylyl)-L-tyrosyl-[protein] + diphosphate. It carries out the reaction L-histidyl-[protein] + UTP = N(tele)-(5'-uridylyl)-L-histidyl-[protein] + diphosphate. It catalyses the reaction L-seryl-[protein] + UTP = O-(5'-uridylyl)-L-seryl-[protein] + diphosphate. The enzyme catalyses L-tyrosyl-[protein] + UTP = O-(5'-uridylyl)-L-tyrosyl-[protein] + diphosphate. In terms of biological role, nucleotidyltransferase involved in the post-translational modification of proteins. It can catalyze the addition of adenosine monophosphate (AMP) or uridine monophosphate (UMP) to a protein, resulting in modifications known as AMPylation and UMPylation. The protein is Protein nucleotidyltransferase YdiU of Cupriavidus metallidurans (strain ATCC 43123 / DSM 2839 / NBRC 102507 / CH34) (Ralstonia metallidurans).